A 485-amino-acid chain; its full sequence is Velvet complex subunit B (485 aa).

Residues 33–459 (GRKHYSLEVV…GNQGQKLPLA (427 aa)) enclose the Velvet domain. The tract at residues 107–353 (VLHPSSVDRH…PPPPRHTYTR (247 aa)) is disordered. Polar residues-rich tracts occupy residues 134 to 155 (APQS…TLSQ), 234 to 243 (RSPSSSTSDH), 267 to 304 (SISS…SPHS), and 326 to 341 (THSQ…QHVS).

Belongs to the velvet family. VelB subfamily. Component of the heterotrimeric velvet complex composed of laeA, veA and velB; VeA acting as a bridging protein between laeA and velB. Forms a heterodimeric complex with vosA; the formation of the velB-vosA complex is light-dependent.

It localises to the nucleus. It is found in the cytoplasm. In terms of biological role, component of the velvet transcription factor complex that controls sexual/asexual developmental ratio in response to light, promoting sexual development in the darkness while stimulating asexual sporulation under illumination. The velvet complex acts as a global regulator for secondary metabolite gene expression. Component of the velB-VosA heterodimeric complex that plays a dual role in activating genes associated with spore maturation and repressing certain development-associated genes. The velB-VosA complex binds DNA through the DNA-binding domain of vosA that recognizes an 11-nucleotide consensus sequence 5'-CTGGCCGCGGC-3' consisting of two motifs in the promoters of key developmental regulatory genes. This Laccaria bicolor (strain S238N-H82 / ATCC MYA-4686) (Bicoloured deceiver) protein is Velvet complex subunit B.